Reading from the N-terminus, the 355-residue chain is Chorismate synthase (355 aa).

Arg48 contacts NADP(+). Residues 126 to 128, Gly278, 293 to 297, and Arg319 each bind FMN; these read RSS and KPIPS.

The protein belongs to the chorismate synthase family. In terms of assembly, homotetramer. Requires FMNH2 as cofactor.

The catalysed reaction is 5-O-(1-carboxyvinyl)-3-phosphoshikimate = chorismate + phosphate. It participates in metabolic intermediate biosynthesis; chorismate biosynthesis; chorismate from D-erythrose 4-phosphate and phosphoenolpyruvate: step 7/7. In terms of biological role, catalyzes the anti-1,4-elimination of the C-3 phosphate and the C-6 proR hydrogen from 5-enolpyruvylshikimate-3-phosphate (EPSP) to yield chorismate, which is the branch point compound that serves as the starting substrate for the three terminal pathways of aromatic amino acid biosynthesis. This reaction introduces a second double bond into the aromatic ring system. This chain is Chorismate synthase, found in Oleidesulfovibrio alaskensis (strain ATCC BAA-1058 / DSM 17464 / G20) (Desulfovibrio alaskensis).